Here is a 446-residue protein sequence, read N- to C-terminus: Exodeoxyribonuclease 7 large subunit (446 aa).

The protein belongs to the XseA family. In terms of assembly, heterooligomer composed of large and small subunits.

Its subcellular location is the cytoplasm. It carries out the reaction Exonucleolytic cleavage in either 5'- to 3'- or 3'- to 5'-direction to yield nucleoside 5'-phosphates.. Bidirectionally degrades single-stranded DNA into large acid-insoluble oligonucleotides, which are then degraded further into small acid-soluble oligonucleotides. The sequence is that of Exodeoxyribonuclease 7 large subunit from Vibrio cholerae serotype O1 (strain ATCC 39315 / El Tor Inaba N16961).